We begin with the raw amino-acid sequence, 108 residues long: Universal stress protein Slr1101 (108 aa).

It belongs to the universal stress protein A family.

This Synechocystis sp. (strain ATCC 27184 / PCC 6803 / Kazusa) protein is Universal stress protein Slr1101.